Reading from the N-terminus, the 138-residue chain is Odorant-binding protein 22 (138 aa).

An N-terminal signal peptide occupies residues 1 to 16 (MKVFIAVFALIAVAAA). (5Z,8Z,11Z,14Z)-eicosatetraenoate is bound at residue Arg30. (9Z)-hexadecenoate contacts are provided by Arg30 and Tyr61. Positions 30 and 61 each coordinate (9Z,12Z)-octadecadienoate. 3 cysteine pairs are disulfide-bonded: Cys33–Cys64, Cys60–Cys113, and Cys103–Cys122. A glycan (N-linked (GlcNAc...) asparagine) is linked at Asn127.

Belongs to the PBP/GOBP family. Monomer in solution. High-level expression in female mouth parts, particularly in the proboscis (at protein level). Moderate-level expression in female antenna (at protein level). Expressed in testis but not in the accessory gland or ejaculatory duct (at protein level). Expressed in spermathecae (at protein level). Female salivary gland. Female chemosensory organs: antenna, palp and proboscis. Not detected in midgut.

The protein localises to the secreted. Its function is as follows. Involved in modulation of blood-feeding behavior and capacity in female mosquitoes. Required for normal oviposition. Required for normal fecundity and fertility of female and male mosquitoes. Required for normal expression of VGA1 gene, which encodes the egg yolk protein vitellogenin-A1. Involved in regulation of spermatozoa development. Required for normal female longevity when mosquitoes are maintained on regular sugar meal. Binds long chain fatty acids. Functionally, (Microbial infection) Facilitates shedding of dengue virus type 2 particles into mosquito saliva. Does not affect dengue virus type 2 replication or infection prevalence in midgut and salivary glands at 14 days after blood feeding. In terms of biological role, (Microbial infection) Facilitates shedding of Zika virus particles into mosquito saliva. Does not affect Zika virus replication or infection prevalence in midgut and salivary glands at 14 days after blood feeding. The chain is Odorant-binding protein 22 from Aedes aegypti (Yellowfever mosquito).